The primary structure comprises 262 residues: MRVALGIEYCGTGFHGWQSQAGGGTVQDALEAALGEVAGVPVGVLCAGRTDAGVHATHQVAHFDAPVDRPLTAWVRGVNSHLPEGVAVRWAQPVAEDFHARFSARGRRYRYLLLNRPQRPGLWQGRVGWFHWPLELEAMQEACLRLLGEHDFSAFRAANCQAKSPVKHMSRAEVRQCGNMFVFDFEASAFLHHMVRNLVGTLVYIGKGTQQPDWIEALLQTKDRKLAAPTFSPDGLYFRGPVYEPHWGLPDPNDDFLDGMLK.

Aspartate 51 functions as the Nucleophile in the catalytic mechanism. Tyrosine 109 provides a ligand contact to substrate.

This sequence belongs to the tRNA pseudouridine synthase TruA family. Homodimer.

The catalysed reaction is uridine(38/39/40) in tRNA = pseudouridine(38/39/40) in tRNA. Its function is as follows. Formation of pseudouridine at positions 38, 39 and 40 in the anticodon stem and loop of transfer RNAs. The sequence is that of tRNA pseudouridine synthase A from Dechloromonas aromatica (strain RCB).